The chain runs to 468 residues: Zinc transporter SLC39A7 (468 aa).

The helical transmembrane segment at 10–30 threads the bilayer; the sequence is WVAVGLLTWAALGLLVAGHEG. Composition is skewed to basic and acidic residues over residues 36 to 56 and 64 to 100; these read RDVE…DFHH and HTHE…DSLH. The segment at 36–116 is disordered; that stretch reads RDVEEDFHGH…SHGASREAGA (81 aa). Pros-methylhistidine is present on H64. 3 helical membrane-spanning segments follow: residues 132–152, 163–183, and 208–228; these read ALGA…LIPV, LQIL…LHLI, and GPIL…LVVE. A compositionally biased stretch (basic residues) spans 237 to 248; that stretch reads GHGHAHAHGHGH. Residues 237–313 form a disordered region; the sequence is GHGHAHAHGH…NPEEEKTGSD (77 aa). Residues 249–312 are compositionally biased toward basic and acidic residues; that stretch reads SHGDSHAHGH…QNPEEEKTGS (64 aa). 3 helical membrane passes run 385–405, 409–429, and 447–467; these read LTAI…GGAV, VAGG…FIYV, and SLLE…IAHL.

This sequence belongs to the ZIP transporter (TC 2.A.5) family. KE4/Catsup subfamily. Homodimer. Rapidly phosphorylated by CK2 following Zn(2+) treatment. This phosphorylation is required for efficient cytosolic Zn(2+) release.

It localises to the endoplasmic reticulum membrane. The protein resides in the golgi apparatus. The protein localises to the cis-Golgi network membrane. It catalyses the reaction Zn(2+)(in) = Zn(2+)(out). Transports Zn(2+) from the endoplasmic reticulum (ER)/Golgi apparatus to the cytosol, playing an essential role in the regulation of cytosolic zinc levels. Acts as a gatekeeper of zinc release from intracellular stores, requiring post-translational activation by phosphorylation on residues, resulting in activation of multiple downstream pathways leading to cell growth and proliferation. Has an essential role in B cell development and is required for proper B cell receptor signaling. Plays an important role in maintaining intestinal epithelial homeostasis and skin dermis development by regulating ER function. Controls cell signaling pathways involved in glucose metabolism in skeletal muscle. Has a protective role against ER stress in different biological contexts. Mediates Zn(2+)-induced ferroptosis. The protein is Zinc transporter SLC39A7 of Rattus norvegicus (Rat).